The chain runs to 308 residues: Isoflavone reductase homolog (308 aa).

NADP(+)-binding positions include 11 to 17 (GGTGYIG), Arg-36, and Lys-45. Lys-133 (proton acceptor) is an active-site residue. NADP(+) is bound at residue Arg-137.

The protein belongs to the NmrA-type oxidoreductase family. Isoflavone reductase subfamily.

It is found in the cytoplasm. This chain is Isoflavone reductase homolog, found in Solanum tuberosum (Potato).